The primary structure comprises 76 residues: MLRLPVSQSNTPTTPIIVKCPTCKKEVEWGEQSPYRPFCTKRCQLIDLGEWAEEEKSIPGAPDLSDSDGWSDDMGY.

The Zn(2+) site is built by Cys20, Cys23, Cys39, and Cys43. Positions 54–76 are disordered; sequence EEKSIPGAPDLSDSDGWSDDMGY. Residues 65-76 show a composition bias toward acidic residues; sequence SDSDGWSDDMGY.

The protein belongs to the DNA gyrase inhibitor YacG family. Interacts with GyrB. It depends on Zn(2+) as a cofactor.

Its function is as follows. Inhibits all the catalytic activities of DNA gyrase by preventing its interaction with DNA. Acts by binding directly to the C-terminal domain of GyrB, which probably disrupts DNA binding by the gyrase. The protein is DNA gyrase inhibitor YacG of Photobacterium profundum (strain SS9).